The sequence spans 383 residues: Meiotically up-regulated gene 93 protein (383 aa).

The TPR repeat unit spans residues 75–108 (KKVIWRRGLAYLRLGHPHLANRDWEHSLELDPNN).

The protein localises to the cytoplasm. Its subcellular location is the nucleus. Functionally, has a role in meiosis. The chain is Meiotically up-regulated gene 93 protein (mug93) from Schizosaccharomyces pombe (strain 972 / ATCC 24843) (Fission yeast).